Here is a 488-residue protein sequence, read N- to C-terminus: Ribulose bisphosphate carboxylase large chain (488 aa).

Asn127 and Thr177 together coordinate substrate. The active-site Proton acceptor is the Lys179. Lys181 contributes to the substrate binding site. Positions 205, 207, and 208 each coordinate Mg(2+). Residue Lys205 is modified to N6-carboxylysine. The Proton acceptor role is filled by His297. 3 residues coordinate substrate: Arg298, His330, and Ser382.

Belongs to the RuBisCO large chain family. Type I subfamily. Heterohexadecamer of 8 large chains and 8 small chains. Mg(2+) serves as cofactor.

The protein localises to the plastid. Its subcellular location is the chloroplast. The catalysed reaction is 2 (2R)-3-phosphoglycerate + 2 H(+) = D-ribulose 1,5-bisphosphate + CO2 + H2O. It carries out the reaction D-ribulose 1,5-bisphosphate + O2 = 2-phosphoglycolate + (2R)-3-phosphoglycerate + 2 H(+). Functionally, ruBisCO catalyzes two reactions: the carboxylation of D-ribulose 1,5-bisphosphate, the primary event in carbon dioxide fixation, as well as the oxidative fragmentation of the pentose substrate in the photorespiration process. Both reactions occur simultaneously and in competition at the same active site. The chain is Ribulose bisphosphate carboxylase large chain from Olisthodiscus luteus (Marine phytoflagellate).